The chain runs to 1099 residues: DNA-directed RNA polymerase subunit beta (1099 aa).

This sequence belongs to the RNA polymerase beta chain family. As to quaternary structure, in plastids the minimal PEP RNA polymerase catalytic core is composed of four subunits: alpha, beta, beta', and beta''. When a (nuclear-encoded) sigma factor is associated with the core the holoenzyme is formed, which can initiate transcription.

The protein localises to the plastid. Its subcellular location is the chloroplast. The catalysed reaction is RNA(n) + a ribonucleoside 5'-triphosphate = RNA(n+1) + diphosphate. Its function is as follows. DNA-dependent RNA polymerase catalyzes the transcription of DNA into RNA using the four ribonucleoside triphosphates as substrates. This is DNA-directed RNA polymerase subunit beta from Bigelowiella natans (Pedinomonas minutissima).